The sequence spans 294 residues: tRNA-cytidine(32) 2-sulfurtransferase (294 aa).

A PP-loop motif motif is present at residues Ser70–Ser75. Residues Cys145, Cys148, and Cys236 each coordinate [4Fe-4S] cluster.

The protein belongs to the TtcA family. As to quaternary structure, homodimer. Requires Mg(2+) as cofactor. It depends on [4Fe-4S] cluster as a cofactor.

It localises to the cytoplasm. It carries out the reaction cytidine(32) in tRNA + S-sulfanyl-L-cysteinyl-[cysteine desulfurase] + AH2 + ATP = 2-thiocytidine(32) in tRNA + L-cysteinyl-[cysteine desulfurase] + A + AMP + diphosphate + H(+). The protein operates within tRNA modification. Catalyzes the ATP-dependent 2-thiolation of cytidine in position 32 of tRNA, to form 2-thiocytidine (s(2)C32). The sulfur atoms are provided by the cysteine/cysteine desulfurase (IscS) system. The sequence is that of tRNA-cytidine(32) 2-sulfurtransferase from Rhizobium meliloti (strain 1021) (Ensifer meliloti).